Reading from the N-terminus, the 1620-residue chain is ABC-type organic anion transporter ABCA8A (1620 aa).

7 helical membrane-spanning segments follow: residues 30 to 50 (TFLE…FLQL), 224 to 244 (CFLF…SAGV), 263 to 283 (SAFW…VTLL), 294 to 314 (VFLT…LSLI), 328 to 348 (FLTD…GFTA), 357 to 377 (LEWL…VQLL), and 397 to 417 (IGTI…TFYF). N454 and N482 each carry an N-linked (GlcNAc...) asparagine glycan. Residues 478–713 (IRIRNLTKDY…WGIGYHLSLQ (236 aa)) form the ABC transporter 1 domain. Residue 514-521 (GHSGAGKS) participates in ATP binding. The chain crosses the membrane as a helical span at residues 861–881 (IVILILVLGIGLLHILSANIY). N967 carries N-linked (GlcNAc...) asparagine glycosylation. Helical transmembrane passes span 979–999 (CFPV…APSA), 1019–1039 (YLAY…YISM), 1068–1088 (ALFE…AFYA), 1105–1125 (ILYV…ISFI), 1133–1153 (SGLW…FMLI), 1159–1179 (ISLF…CTLL), and 1196–1216 (EYSY…VVIL). One can recognise an ABC transporter 2 domain in the interval 1284–1517 (LRKEYKGKKK…FGKEYLLEMK (234 aa)). ATP is bound at residue 1322 to 1329 (GHNGAGKS).

Belongs to the ABC transporter superfamily. ABCA family. As to expression, expressed in lung, heart, liver, skeletal muscle and testis. Highly expressed in the liver, and is also abundant in heart and skeletal muscle. Highly expressed in heart.

It localises to the cell membrane. The protein localises to the basolateral cell membrane. The enzyme catalyses taurocholate(in) + ATP + H2O = taurocholate(out) + ADP + phosphate + H(+). The catalysed reaction is cholesterol(in) + ATP + H2O = cholesterol(out) + ADP + phosphate + H(+). Cholesterol efflux is increased by extracellularly applied taurocholate. Its function is as follows. Mediates cholesterol and taurocholate efflux. Through the interaction with ABCA1 potentiates the cholesterol efflux to lipid-free APOA1, in turn regulates high-density lipoprotein cholesterol levels. The chain is ABC-type organic anion transporter ABCA8A from Mus musculus (Mouse).